The sequence spans 78 residues: UPF0349 protein ABC2936 (78 aa).

The protein belongs to the UPF0349 family.

This chain is UPF0349 protein ABC2936, found in Shouchella clausii (strain KSM-K16) (Alkalihalobacillus clausii).